A 153-amino-acid polypeptide reads, in one-letter code: Arachidonate 5-lipoxygenase-activating protein (153 aa).

Over 1–8 the chain is Lumenal; that stretch reads MDQETVGN. Residues 9 to 30 traverse the membrane as a helical segment; sequence IVLLAIVTLISVVQNGFFAHKV. Over 31–52 the chain is Cytoplasmic; sequence EHESKTHNGRSFQRTGPLAFER. The helical transmembrane segment at 53-77 threads the bilayer; it reads VYTANQNCVDAYPTFLVMLWSAGLL. At 78–80 the chain is on the lumenal side; it reads CSQ. Residues 81–102 traverse the membrane as a helical segment; that stretch reads VPAAFAGLMYLFVRQKYFVGYL. Over 103 to 107 the chain is Cytoplasmic; the sequence is GERTQ. An intramembrane segment occupies 108 to 115; it reads STPGYIFG. The helical transmembrane segment at 116-128 threads the bilayer; sequence KRIILFLFAMSLA. Topologically, residues 129-153 are lumenal; sequence GILNYFLIAFFGSDFENYIKTVTTT.

Belongs to the MAPEG family. In terms of assembly, homotrimer. Interacts with LTC4S and ALOX5.

The protein localises to the nucleus membrane. It is found in the endoplasmic reticulum membrane. Required for leukotriene biosynthesis by ALOX5 (5-lipoxygenase). Anchors ALOX5 to the membrane. Binds arachidonic acid, and could play an essential role in the transfer of arachidonic acid to ALOX5. Binds to MK-886, a compound that blocks the biosynthesis of leukotrienes. This Ovis aries (Sheep) protein is Arachidonate 5-lipoxygenase-activating protein (ALOX5AP).